A 761-amino-acid polypeptide reads, in one-letter code: Xaa-Pro dipeptidyl-peptidase (761 aa).

Catalysis depends on charge relay system residues serine 347, aspartate 467, and histidine 497.

This sequence belongs to the peptidase S15 family. In terms of assembly, homodimer.

It is found in the cytoplasm. It carries out the reaction Hydrolyzes Xaa-Pro-|- bonds to release unblocked, N-terminal dipeptides from substrates including Ala-Pro-|-p-nitroanilide and (sequentially) Tyr-Pro-|-Phe-Pro-|-Gly-Pro-|-Ile.. Removes N-terminal dipeptides sequentially from polypeptides having unsubstituted N-termini provided that the penultimate residue is proline. This is Xaa-Pro dipeptidyl-peptidase from Streptococcus agalactiae serotype III (strain NEM316).